The chain runs to 276 residues: MSEDMTYATLTFQDSVAAGNNQDRNNLRKRGYPAPSSIWRQAALGLLTLCVMLLIGLVTLGIMFLQMSSEINSDSDKLTQLQKIIHQQQDNISQQLSKYRNFPVEEEFLKSQISSLLKRQGQMAIKLCQELIIHTSDHKCNPCPKTWKWYQTSCYYFAVNEEKTWPNSRKNCMDKNSTLVKIDSLEEKDFLRSQPLPKFPFFWLGLSWDPSGRSWLWEDSSRPSPSLFSAYEYAQINESKGCAYFQNGNIYISRCSAEISWICEKTAALVKIEDLD.

The Cytoplasmic portion of the chain corresponds to 1-43; that stretch reads MSEDMTYATLTFQDSVAAGNNQDRNNLRKRGYPAPSSIWRQAA. An ITIM motif motif is present at residues 5-10; that stretch reads MTYATL. Residue Tyr7 is modified to Phosphotyrosine. The helical; Signal-anchor for type II membrane protein transmembrane segment at 44 to 64 threads the bilayer; the sequence is LGLLTLCVMLLIGLVTLGIMF. Residues 65–276 are Extracellular-facing; it reads LQMSSEINSD…AALVKIEDLD (212 aa). Asn91, Asn176, and Asn237 each carry an N-linked (GlcNAc...) asparagine glycan. The 115-residue stretch at 150–264 folds into the C-type lectin domain; that stretch reads YQTSCYYFAV…CSAEISWICE (115 aa). Cystine bridges form between Cys172-Cys263 and Cys242-Cys255.

In terms of assembly, homodimer. Interacts (via ITIM motif) with PTPN6. Interacts (via ITIM motif) with PTPN11; this interaction triggers dephosphorylation and activation of PTPN11.

It localises to the cell membrane. In terms of biological role, inhibitory receptor postulated to negatively regulate immune and non-immune functions. Upon phosphorylation, recruits SH2 domain-containing PTPN6 and PTPN11 phosphatases to its ITIM motif and antagonizes activation signals. Although it inhibits KLRK1/NKG2D-mediated signaling, it does not bind known ligands of KLRK1/NKG2D and therefore is not its inhibitory counterpart. May limit activation of myeloid cell subsets in response to infection or tissue inflammation. May protect target cells against natural killer cell-mediated lysis. May negatively regulate cell cycle and differentiation of melanocytes via inactivation of STAT3. The chain is C-type lectin domain family 12 member B (CLEC12B) from Bos taurus (Bovine).